The primary structure comprises 254 residues: Triosephosphate isomerase (254 aa).

12–14 lines the substrate pocket; it reads NWK. Residue histidine 99 is the Electrophile of the active site. The Proton acceptor role is filled by glutamate 169. Residues glycine 175, serine 214, and 235-236 each bind substrate; that span reads GG.

Belongs to the triosephosphate isomerase family. As to quaternary structure, homodimer.

Its subcellular location is the cytoplasm. The catalysed reaction is D-glyceraldehyde 3-phosphate = dihydroxyacetone phosphate. It participates in carbohydrate biosynthesis; gluconeogenesis. The protein operates within carbohydrate degradation; glycolysis; D-glyceraldehyde 3-phosphate from glycerone phosphate: step 1/1. Functionally, involved in the gluconeogenesis. Catalyzes stereospecifically the conversion of dihydroxyacetone phosphate (DHAP) to D-glyceraldehyde-3-phosphate (G3P). The protein is Triosephosphate isomerase of Bartonella quintana (strain Toulouse) (Rochalimaea quintana).